The sequence spans 669 residues: Probable ferric reductase transmembrane component (669 aa).

Residues 17 to 86 form a disordered region; the sequence is FKTNGTEYAK…SGKGNSGTST (70 aa). Residues asparagine 20, asparagine 52, asparagine 64, and asparagine 116 are each glycosylated (N-linked (GlcNAc...) asparagine). The segment covering 28–86 has biased composition (low complexity); it reads TTKSSSGSKTSTSASKSSKSTGSSNASKSSTNAHGSNSSTSSTSSSSSKSGKGNSGTST. Residues 122–142 form a helical membrane-spanning segment; it reads GSGLLGYWAGILAIAIFANMI. Asparagine 152 is a glycosylation site (N-linked (GlcNAc...) asparagine). The next 5 helical transmembrane spans lie at 198–218, 234–254, 281–301, 313–333, and 340–360; these read IIVV…IHHV, LIAD…ILFG, VDVL…KATG, IWGT…MLFF, and VFFL…YYHL. Positions 239-373 constitute a Ferric oxidoreductase domain; that stretch reads TGILGTFLIP…GYGDFMWAAI (135 aa). An FAD-binding FR-type domain is found at 374-492; it reads AVWAFDRVVR…EGPYGEPSSA (119 aa). FAD is bound at residue 437-442; the sequence is HPFTFT. Residues 499–519 form a helical membrane-spanning segment; sequence VVFVAGGNGIPGIYSECVDLA. Asparagine 524 and asparagine 653 each carry an N-linked (GlcNAc...) asparagine glycan.

Belongs to the ferric reductase (FRE) family. FAD serves as cofactor.

It is found in the membrane. It carries out the reaction 2 a Fe(II)-siderophore + NAD(+) + H(+) = 2 a Fe(III)-siderophore + NADH. The chain is Probable ferric reductase transmembrane component (CFL1) from Candida albicans (Yeast).